The primary structure comprises 434 residues: Salicylate hydroxylase (434 aa).

9–38 (RIGIVGGGISGVALALELCRYSHIQVQLFE) contributes to the FAD binding site.

In terms of assembly, monomer. FAD is required as a cofactor.

The enzyme catalyses salicylate + NADH + O2 + 2 H(+) = catechol + CO2 + NAD(+) + H2O. It participates in aromatic compound metabolism; naphthalene degradation. The polypeptide is Salicylate hydroxylase (nahG) (Pseudomonas putida (Arthrobacter siderocapsulatus)).